A 295-amino-acid polypeptide reads, in one-letter code: Universal stress protein Mb2028c (295 aa).

ATP contacts are provided by residues Gly-13, 117–123 (GSSGRGA), 131–132 (SV), Gly-165, Asp-198, 262–268 (GSHGRGG), and 276–278 (SVS).

This sequence belongs to the universal stress protein A family.

The polypeptide is Universal stress protein Mb2028c (Mycobacterium bovis (strain ATCC BAA-935 / AF2122/97)).